The chain runs to 228 residues: Histidine decarboxylase (228 aa).

H30 is a substrate binding site. The residue at position 143 (K143) is an N6-(pyridoxal phosphate)lysine.

This sequence belongs to the group II decarboxylase family. In terms of assembly, homotetramer. Pyridoxal 5'-phosphate is required as a cofactor.

The catalysed reaction is L-histidine + H(+) = histamine + CO2. This Raoultella ornithinolytica (Klebsiella ornithinolytica) protein is Histidine decarboxylase (hdc).